We begin with the raw amino-acid sequence, 207 residues long: Large ribosomal subunit protein bL25 (207 aa).

The protein belongs to the bacterial ribosomal protein bL25 family. CTC subfamily. Part of the 50S ribosomal subunit; part of the 5S rRNA/L5/L18/L25 subcomplex. Contacts the 5S rRNA. Binds to the 5S rRNA independently of L5 and L18.

This is one of the proteins that binds to the 5S RNA in the ribosome where it forms part of the central protuberance. In Paraburkholderia xenovorans (strain LB400), this protein is Large ribosomal subunit protein bL25.